The following is a 112-amino-acid chain: UPF0060 membrane protein SAV_4756 (112 aa).

The next 4 helical transmembrane spans lie at 8–28 (ALFV…WQGV), 33–53 (GWLW…VATL), 62–82 (ILAA…MVAD), and 91–111 (VTGA…PRGG).

This sequence belongs to the UPF0060 family.

It is found in the cell membrane. This chain is UPF0060 membrane protein SAV_4756, found in Streptomyces avermitilis (strain ATCC 31267 / DSM 46492 / JCM 5070 / NBRC 14893 / NCIMB 12804 / NRRL 8165 / MA-4680).